The following is a 211-amino-acid chain: Protein-L-isoaspartate O-methyltransferase (211 aa).

The active site involves S60.

Belongs to the methyltransferase superfamily. L-isoaspartyl/D-aspartyl protein methyltransferase family.

It is found in the cytoplasm. It carries out the reaction [protein]-L-isoaspartate + S-adenosyl-L-methionine = [protein]-L-isoaspartate alpha-methyl ester + S-adenosyl-L-homocysteine. Catalyzes the methyl esterification of L-isoaspartyl residues in peptides and proteins that result from spontaneous decomposition of normal L-aspartyl and L-asparaginyl residues. It plays a role in the repair and/or degradation of damaged proteins. This Ectopseudomonas mendocina (strain ymp) (Pseudomonas mendocina) protein is Protein-L-isoaspartate O-methyltransferase.